Reading from the N-terminus, the 803-residue chain is Exocyst complex component 6 (803 aa).

It belongs to the SEC15 family. In terms of assembly, the exocyst complex is composed of EXOC1, EXOC2, EXOC3, EXOC4, EXOC5, EXOC6, EXOC7 and EXOC8. Interacts with CNTRL. Interacts with RAB11A in a GTP-dependent manner.

Its subcellular location is the cytoplasm. It is found in the perinuclear region. The protein localises to the cell projection. The protein resides in the growth cone. It localises to the midbody. Its subcellular location is the midbody ring. In terms of biological role, component of the exocyst complex involved in the docking of exocytic vesicles with fusion sites on the plasma membrane. Together with RAB11A, RAB3IP, RAB8A, PARD3, PRKCI, ANXA2, CDC42 and DNMBP promotes transcytosis of PODXL to the apical membrane initiation sites (AMIS), apical surface formation and lumenogenesis. The sequence is that of Exocyst complex component 6 (EXOC6) from Canis lupus familiaris (Dog).